The following is a 190-amino-acid chain: Movement protein (190 aa).

This sequence belongs to the tombusvirus/aureusvirus movement protein p22 family.

Its subcellular location is the host membrane. In terms of biological role, transports viral genome to neighboring plant cells directly through plasmosdesmata, without any budding. The movement protein allows efficient cell to cell propagation, by bypassing the host cell wall barrier. The protein is Movement protein of Cucumber necrosis virus (CNV).